The chain runs to 243 residues: 1-(5-phosphoribosyl)-5-[(5-phosphoribosylamino)methylideneamino] imidazole-4-carboxamide isomerase (243 aa).

The Proton acceptor role is filled by D8. D129 serves as the catalytic Proton donor.

The protein belongs to the HisA/HisF family.

The protein resides in the cytoplasm. The catalysed reaction is 1-(5-phospho-beta-D-ribosyl)-5-[(5-phospho-beta-D-ribosylamino)methylideneamino]imidazole-4-carboxamide = 5-[(5-phospho-1-deoxy-D-ribulos-1-ylimino)methylamino]-1-(5-phospho-beta-D-ribosyl)imidazole-4-carboxamide. Its pathway is amino-acid biosynthesis; L-histidine biosynthesis; L-histidine from 5-phospho-alpha-D-ribose 1-diphosphate: step 4/9. In Geobacter sp. (strain M21), this protein is 1-(5-phosphoribosyl)-5-[(5-phosphoribosylamino)methylideneamino] imidazole-4-carboxamide isomerase.